Reading from the N-terminus, the 350-residue chain is Small ribosomal subunit biogenesis GTPase RsgA (350 aa).

Positions 1–17 are enriched in polar residues; that stretch reads MSKNKLSKGQQRRVNAN. The segment at 1-27 is disordered; that stretch reads MSKNKLSKGQQRRVNANHQRRLKTSAE. One can recognise a CP-type G domain in the interval 104–273; sequence TSVLTRPDFY…VIDSPGVREF (170 aa). Residues 160–163 and 214–222 contribute to the GTP site; these read NKID and GQSGVGKSS. Residues Cys297, Cys302, His304, and Cys310 each coordinate Zn(2+).

It belongs to the TRAFAC class YlqF/YawG GTPase family. RsgA subfamily. Monomer. Associates with 30S ribosomal subunit, binds 16S rRNA. The cofactor is Zn(2+).

It localises to the cytoplasm. Its function is as follows. One of several proteins that assist in the late maturation steps of the functional core of the 30S ribosomal subunit. Helps release RbfA from mature subunits. May play a role in the assembly of ribosomal proteins into the subunit. Circularly permuted GTPase that catalyzes slow GTP hydrolysis, GTPase activity is stimulated by the 30S ribosomal subunit. In Salmonella agona (strain SL483), this protein is Small ribosomal subunit biogenesis GTPase RsgA.